Reading from the N-terminus, the 119-residue chain is Ribonuclease P protein component (119 aa).

The protein belongs to the RnpA family. In terms of assembly, consists of a catalytic RNA component (M1 or rnpB) and a protein subunit.

The catalysed reaction is Endonucleolytic cleavage of RNA, removing 5'-extranucleotides from tRNA precursor.. Its function is as follows. RNaseP catalyzes the removal of the 5'-leader sequence from pre-tRNA to produce the mature 5'-terminus. It can also cleave other RNA substrates such as 4.5S RNA. The protein component plays an auxiliary but essential role in vivo by binding to the 5'-leader sequence and broadening the substrate specificity of the ribozyme. The polypeptide is Ribonuclease P protein component (Streptococcus equi subsp. zooepidemicus (strain MGCS10565)).